The following is a 605-amino-acid chain: 9-cis-epoxycarotenoid dioxygenase NCED1, chloroplastic (605 aa).

Residues 1–16 (MATTTSHATNTWIKTK) constitute a chloroplast transit peptide. The interval 55-89 (ILHFPKQSSNYQTPKNNTISHPKQENNNSSSSSTS) is disordered. Over residues 60–75 (KQSSNYQTPKNNTISH) the composition is skewed to polar residues. Residues 80–89 (NNNSSSSSTS) show a composition bias toward low complexity. The Fe cation site is built by His-302, His-351, His-416, and His-592.

Belongs to the carotenoid oxygenase family. The cofactor is Fe(2+). Expressed in developing and ripening fruits. Highly expressed in pulp. Observed in unpollinated ovaries (e.g. ovules, placenta and pericarp). Expressed in flowers.

It localises to the plastid. Its subcellular location is the chloroplast stroma. The catalysed reaction is a 9-cis-epoxycarotenoid + O2 = a 12'-apo-carotenal + 2-cis,4-trans-xanthoxin. The enzyme catalyses 9-cis-violaxanthin + O2 = (3S,5R,6S)-5,6-epoxy-3-hydroxy-5,6-dihydro-12'-apo-beta-caroten-12'-al + 2-cis,4-trans-xanthoxin. It catalyses the reaction 9'-cis-neoxanthin + O2 = (3S,5R,6R)-3,5-dihydroxy-6,7-didehydro-5,6-dihydro-12'-apo-beta-caroten-12'-al + 2-cis,4-trans-xanthoxin. Its pathway is plant hormone biosynthesis; abscisate biosynthesis. Has a 11,12(11',12') 9-cis epoxycarotenoid cleavage activity. Catalyzes the first step of abscisic-acid (ABA) biosynthesis from carotenoids. Required for ABA accumulation upon drought. Required for ABA-mediated regulation of anther/pollen development, including metabolism, cell wall modification and transcription level. Positive regulator of fruit ripening involved in the biosynthesis of abscisic acid (ABA); initiates ABA biosynthesis at the onset of fruit ripening. Modulates the degree of pigmentation and carotenoid composition as well as pectin catabolism during ripening and may regulate the ethylene production and action in climacteric tomato fruit. This is 9-cis-epoxycarotenoid dioxygenase NCED1, chloroplastic from Solanum lycopersicum (Tomato).